A 1836-amino-acid polypeptide reads, in one-letter code: Sodium channel protein type 4 subunit alpha (1836 aa).

At 1 to 131 the chain is on the cytoplasmic side; it reads MARPSLCTLV…RGAIKVLIHA (131 aa). Basic and acidic residues predominate over residues 39–60; the sequence is LQRNKQMEIEEPERKPRSDLEA. Residues 39–63 form a disordered region; it reads LQRNKQMEIEEPERKPRSDLEAGKN. Residues 113–454 form an I repeat; it reads LLSPFSVVRR…VVAMAYAEQN (342 aa). A helical transmembrane segment spans residues 132–150; sequence LFSMFIMITILTNCVFMTM. Residues 151-157 are Extracellular-facing; it reads SDPPPWS. The helical transmembrane segment at 158 to 178 threads the bilayer; the sequence is KNVEYTFTGIYTFESLIKILA. The Cytoplasmic segment spans residues 179–192; that stretch reads RGFCVDDFTFLRDP. Residues 193-210 form a helical membrane-spanning segment; it reads WNWLDFSVIMMAYLTEFV. At 211 to 216 the chain is on the extracellular side; sequence DLGNIS. An N-linked (GlcNAc...) asparagine glycan is attached at N214. A helical transmembrane segment spans residues 217-233; the sequence is ALRTFRVLRALKTITVI. Residues 234 to 252 lie on the Cytoplasmic side of the membrane; the sequence is PGLKTIVGALIQSVKKLSD. A helical transmembrane segment spans residues 253 to 272; it reads VMILTVFCLSVFALVGLQLF. Residues 273 to 391 lie on the Extracellular side of the membrane; that stretch reads MGNLRQKCVR…PNYGYTSYDT (119 aa). Cysteines 280 and 360 form a disulfide. N-linked (GlcNAc...) asparagine glycans are attached at residues N288, N291, N297, N303, N315, N321, N333, and N362. Residues C369 and C375 are joined by a disulfide bond. The pore-forming intramembrane region spans 392 to 416; sequence FSWAFLALFRLMTQDYWENLFQLTL. Topologically, residues 417–423 are extracellular; it reads RAAGKTY. The chain crosses the membrane as a helical span at residues 424 to 444; it reads MIFFVVIIFLGSFYLINLILA. The Cytoplasmic portion of the chain corresponds to 445-578; sequence VVAMAYAEQN…NIIHLIVMDP (134 aa). The disordered stretch occupies residues 493-530; it reads GGEADGDPAHGKDCNGSLDTSQGEKGAPRQSSSGDSGI. Residues 509 to 528 are compositionally biased toward polar residues; that stretch reads SLDTSQGEKGAPRQSSSGDS. The stretch at 560 to 832 is one II repeat; sequence CCAPWLKFKN…QIAIGRIKLG (273 aa). Residues 579-597 traverse the membrane as a helical segment; sequence FVDLGITICIVLNTLFMAM. The Extracellular segment spans residues 598 to 608; that stretch reads EHYPMTEHFDN. Residues 609–628 traverse the membrane as a helical segment; sequence VLTVGNLVFTGIFTAEMVLK. Topologically, residues 629–642 are cytoplasmic; the sequence is LIAMDPYEYFQQGW. The helical transmembrane segment at 643–662 threads the bilayer; it reads NIFDSIIVTLSLVELGLANV. At 663-664 the chain is on the extracellular side; sequence QG. A helical transmembrane segment spans residues 665 to 682; the sequence is LSVLRSFRLLRVFKLAKS. Residues 683–698 are Cytoplasmic-facing; that stretch reads WPTLNMLIKIIGNSVG. Residues 699–717 form a helical membrane-spanning segment; the sequence is ALGNLTLVLAIIVFIFAVV. Topologically, residues 718–746 are extracellular; it reads GMQLFGKSYKECVCKIALDCNLPRWHMHD. C731 and C737 are oxidised to a cystine. Residues 747 to 767 constitute an intramembrane region (pore-forming); the sequence is FFHSFLIVFRILCGEWIETMW. Over 768–778 the chain is Extracellular; it reads DCMEVAGQAMC. C769 and C778 are joined by a disulfide. The helical transmembrane segment at 779–797 threads the bilayer; sequence LTVFLMVMVIGNLVVLNLF. The Cytoplasmic segment spans residues 798–1032; that stretch reads LALLLSSFSA…ACFKIVEHNW (235 aa). 2 disordered regions span residues 863–885 and 930–992; these read GAGEAGEAGETAPEDEKKEPPEE and ESDL…QPEE. Basic and acidic residues predominate over residues 876–885; sequence EDEKKEPPEE. Composition is skewed to acidic residues over residues 930-947 and 975-992; these read ESDLEMPTEEETDTFSEP and EDPEEQAEENPEGEQPEE. An III repeat occupies 1013 to 1326; the sequence is RGKKWWTLRR…KKYYNAMKKL (314 aa). A helical membrane pass occupies residues 1033 to 1050; it reads FETFIVFMILLSSGALAF. At 1051–1063 the chain is on the extracellular side; sequence EDIYIEQRRVIRT. Residues 1064 to 1082 traverse the membrane as a helical segment; sequence ILEYADKVFTYIFIMEMLL. The Cytoplasmic segment spans residues 1083 to 1096; it reads KWVAYGFKVYFTNA. The helical transmembrane segment at 1097–1115 threads the bilayer; the sequence is WCWLDFLIVDVSIISLVAN. Residues 1116-1123 are Extracellular-facing; sequence WLGYSELG. A helical membrane pass occupies residues 1124–1142; it reads PIKSLRTLRALRPLRALSR. Topologically, residues 1143 to 1159 are cytoplasmic; that stretch reads FEGMRVVVNALLGAIPS. A helical membrane pass occupies residues 1160-1179; that stretch reads IMNVLLVCLIFWLIFSIMGV. The Extracellular portion of the chain corresponds to 1180 to 1230; that stretch reads NLFAGKFYYCINTTTSERFDISEVNNKSECESLMHTGQVRWLNVKVNYDNV. A disulfide bridge links C1189 with C1209. N-linked (GlcNAc...) asparagine glycosylation is found at N1191 and N1205. An intramembrane region (pore-forming) is located at residues 1231 to 1252; sequence GLGYLSLLQVATFKGWMDIMYA. Over 1253–1269 the chain is Extracellular; the sequence is AVDSREKEEQPQYEVNL. The helical transmembrane segment at 1270-1291 threads the bilayer; sequence YMYLYFVIFIIFGSFFTLNLFI. At 1292 to 1354 the chain is on the cytoplasmic side; sequence GVIIDNFNQQ…MVYDLVTKQA (63 aa). Positions 1310–1312 are important for rapid channel inactivation; that stretch reads IFM. One copy of the IV repeat lies at 1335-1633; the sequence is IPRPQNKIQG…WEKFDPDATQ (299 aa). Residues 1355 to 1372 traverse the membrane as a helical segment; it reads FDITIMILICLNMVTMMV. The Extracellular segment spans residues 1373 to 1383; sequence ETDNQSQLKVD. A helical transmembrane segment spans residues 1384–1402; sequence ILYNINMIFIIIFTGECVL. Residues 1403 to 1414 are Cytoplasmic-facing; it reads KMLALRQYYFTV. The chain crosses the membrane as a helical span at residues 1415-1432; that stretch reads GWNIFDFVVVILSIVGLA. The Extracellular segment spans residues 1433 to 1445; sequence LSDLIQKYFVSPT. Residues 1446–1462 form a helical membrane-spanning segment; it reads LFRVIRLARIGRVLRLI. Over 1463–1481 the chain is Cytoplasmic; it reads RGAKGIRTLLFALMMSLPA. A helical membrane pass occupies residues 1482 to 1499; sequence LFNIGLLLFLVMFIYSIF. Topologically, residues 1500–1521 are extracellular; that stretch reads GMSNFAYVKKESGIDDMFNFET. Positions 1522–1544 form an intramembrane region, pore-forming; it reads FGNSIICLFEITTSAGWDGLLNP. Topologically, residues 1545–1574 are extracellular; it reads ILNSGPPDCDPNLENPGTSVKGDCGNPSIG. C1553 and C1568 are disulfide-bonded. The helical transmembrane segment at 1575-1597 threads the bilayer; that stretch reads ICFFCSYIIISFLIVVNMYIAII. Residues 1598–1836 lie on the Cytoplasmic side of the membrane; sequence LENFNVATEE…VRPGVKESLV (239 aa). Residues 1727 to 1756 enclose the IQ domain; it reads EEVCAIKIQRAYRRHLLQRSMKQASYMYRH. A disordered region spans residues 1778–1836; sequence KMYGHENGNSSSPSPEEKGEAGDAGPTMGLMPISPSDTAWPPAPPPGQTVRPGVKESLV.

It belongs to the sodium channel (TC 1.A.1.10) family. Nav1.4/SCN4A subfamily. As to quaternary structure, the Nav1.4 voltage-gated sodium channel consists of an ion-conducting alpha subunit SCN4A which is functional on its own and a regulatory beta subunit SCN1B. SCN1B strongly enhances the presence of SCN4A at the cell surface. SCN1B is also required for rapid channel inactivation and recovery after inactivation. It prevents the decrease of channel activity in response to repetitive, high-frequency depolarizations. Interacts with the syntrophins SNTA1, SNTB1 and SNTB2 (via PDZ domain); probably links SCN4A to the actin cytoskeleton and the extracellular matrix via the dystrophin-associated protein complex and regulates its localization in muscle cells. Interacts with TMEM233; probable regulator of the channel.

Its subcellular location is the cell membrane. It catalyses the reaction Na(+)(in) = Na(+)(out). The channel is inhibited by tetrodotoxin and saxitoxin. Inhibited by the conotoxin GVIIJ. In terms of biological role, pore-forming subunit of Nav1.4, a voltage-gated sodium (Nav) channel that directly mediates the depolarizing phase of action potentials in excitable membranes. Navs, also called VGSCs (voltage-gated sodium channels) or VDSCs (voltage-dependent sodium channels), operate by switching between closed and open conformations depending on the voltage difference across the membrane. In the open conformation they allow Na(+) ions to selectively pass through the pore, along their electrochemical gradient. The influx of Na+ ions provokes membrane depolarization, initiating the propagation of electrical signals throughout cells and tissues. Highly expressed in skeletal muscles, Nav1.4 generates the action potential crucial for muscle contraction. The sequence is that of Sodium channel protein type 4 subunit alpha from Homo sapiens (Human).